A 347-amino-acid polypeptide reads, in one-letter code: Dihydroorotase (347 aa).

His-14 and His-16 together coordinate Zn(2+). Residues 16-18 (HLR) and Asn-42 each bind substrate. Zn(2+) contacts are provided by Lys-100, His-137, and His-175. The residue at position 100 (Lys-100) is an N6-carboxylysine. Substrate is bound at residue His-137. Leu-220 serves as a coordination point for substrate. Asp-248 is a Zn(2+) binding site. Residue Asp-248 is part of the active site. Residues His-252 and Ala-264 each coordinate substrate.

This sequence belongs to the metallo-dependent hydrolases superfamily. DHOase family. Class II DHOase subfamily. Homodimer. Zn(2+) serves as cofactor.

The catalysed reaction is (S)-dihydroorotate + H2O = N-carbamoyl-L-aspartate + H(+). Its pathway is pyrimidine metabolism; UMP biosynthesis via de novo pathway; (S)-dihydroorotate from bicarbonate: step 3/3. In terms of biological role, catalyzes the reversible cyclization of carbamoyl aspartate to dihydroorotate. The polypeptide is Dihydroorotase (Pseudomonas syringae pv. tomato (strain ATCC BAA-871 / DC3000)).